A 33-amino-acid chain; its full sequence is Photosystem II reaction center protein Psb30 (33 aa).

Residues 5-25 (VIAQLTVLSLIVLSGPLVIIL) traverse the membrane as a helical segment.

This sequence belongs to the Psb30/Ycf12 family. As to quaternary structure, PSII is composed of 1 copy each of membrane proteins PsbA, PsbB, PsbC, PsbD, PsbE, PsbF, PsbH, PsbI, PsbJ, PsbK, PsbL, PsbM, PsbT, PsbX, PsbY, PsbZ, Psb30/Ycf12, peripheral proteins of the oxygen-evolving complex and a large number of cofactors. It forms dimeric complexes.

The protein localises to the plastid. The protein resides in the chloroplast thylakoid membrane. Functionally, a core subunit of photosystem II (PSII), probably helps stabilize the reaction center. This chain is Photosystem II reaction center protein Psb30, found in Chlorokybus atmophyticus (Soil alga).